A 457-amino-acid polypeptide reads, in one-letter code: Dynein regulatory complex protein 10 (457 aa).

3 coiled-coil regions span residues E101–R127, I209–V258, and Q292–E381. The IQ domain maps to M397 to K426. The disordered stretch occupies residues S419–K457. The span at K428–K445 shows a compositional bias: basic and acidic residues. Positions E446 to K457 are enriched in basic residues.

The protein belongs to the DRC10 family. Component of the nexin-dynein regulatory complex (N-DRC). Interacts with CFAP52.

The protein localises to the cytoplasm. Its subcellular location is the cytoskeleton. It is found in the flagellum axoneme. Component of the nexin-dynein regulatory complex (N-DRC), a key regulator of ciliary/flagellar motility which maintains the alignment and integrity of the distal axoneme and regulates microtubule sliding in motile axonemes. The polypeptide is Dynein regulatory complex protein 10 (Iqcd) (Rattus norvegicus (Rat)).